The primary structure comprises 2055 residues: Citron Rho-interacting kinase (2055 aa).

At methionine 1 the chain carries N-acetylmethionine. Residues 97–359 (FEVRSLVGCG…FEGLCCHPFF (263 aa)) form the Protein kinase domain. ATP is bound by residues 103–111 (VGCGHFAEV) and lysine 126. Aspartate 221 serves as the catalytic Proton acceptor. In terms of domain architecture, AGC-kinase C-terminal spans 360–430 (ARTDWNNIRN…SKALGYLGRS (71 aa)). Phosphoserine is present on residues serine 432, serine 439, serine 479, and serine 581. 3 coiled-coil regions span residues 441 to 1086 (AKVS…QWEA), 1091 to 1247 (LGDE…VLYS), and 1275 to 1325 (AKKK…RKAT). An interaction with Rho/Rac region spans residues 1132 to 1328 (LAVKEHKAEI…AAHRKATDHP (197 aa)). Tyrosine 1237 is subject to Phosphotyrosine. Over residues 1316 to 1329 (REEAAHRKATDHPH) the composition is skewed to basic and acidic residues. Disordered stretches follow at residues 1316 to 1336 (REEAAHRKATDHPHPSTPATA) and 1348 to 1377 (SPEHQPSAMSLLAPPSSRRKESSTPEEFSR). Residues 1353–1363 (PSAMSLLAPPS) show a composition bias toward low complexity. Positions 1365–1377 (RRKESSTPEEFSR) are enriched in basic and acidic residues. The Phorbol-ester/DAG-type zinc finger occupies 1388–1437 (PHRFNVGLNMRATKCAVCLDTVHFGRQASKCLECQVMCHPKCSTCLPATC). In terms of domain architecture, PH spans 1469-1589 (SLHLEGWMKV…WVTALESVVA (121 aa)). In terms of domain architecture, CNH spans 1617-1907 (RLDMNCTLPF…RYLGPAISSG (291 aa)). Lysine 1747 is modified (N6-acetyllysine). Residues 1932-2040 (SGTEQHRVPS…RGRLPAGAVR (109 aa)) are disordered. The segment covering 1939-1948 (VPSTSRSSPN) has biased composition (polar residues). At serine 1966 the chain carries Phosphoserine. A compositionally biased stretch (basic and acidic residues) spans 1974–2031 (SHPREPSTPHRYRDREGRTELRRDKSPGRPLEREKSPGRMLSTRRERSPGRLFEDSSR). Positions 1979–1984 (PSTPHR) match the SH3-binding motif. Serine 2021 carries the post-translational modification Phosphoserine. The residue at position 2041 (threonine 2041) is a Phosphothreonine.

The protein belongs to the protein kinase superfamily. AGC Ser/Thr protein kinase family. As to quaternary structure, interacts with TTC3. Homodimer. Directly interacts with KIF14 depending on the activation state (stronger interaction with the kinase-dead form). As to expression, a major signal was observed in testis and brain, but it was also detected in thymus, spleen, kidney, heart and lung.

The protein resides in the cytoplasm. It catalyses the reaction L-seryl-[protein] + ATP = O-phospho-L-seryl-[protein] + ADP + H(+). It carries out the reaction L-threonyl-[protein] + ATP = O-phospho-L-threonyl-[protein] + ADP + H(+). Functionally, plays a role in cytokinesis. Required for KIF14 localization to the central spindle and midbody. Probable RHO/RAC effector that binds to the GTP-bound forms of RHO and RAC1. It probably binds p21 with a tighter specificity in vivo. Displays serine/threonine protein kinase activity. Plays an important role in the regulation of cytokinesis and the development of the central nervous system. Phosphorylates MYL9/MLC2. The protein is Citron Rho-interacting kinase (Cit) of Mus musculus (Mouse).